The following is a 206-amino-acid chain: MKPQFITLDGIDGAGKSTNLAVIKAWFERRGLPVLFTREPGGTPVGEALREILLNPETKAGLRAETLMMFAARMQHIEDVILPALSDGIHVVSDRFTDATFAYQGGGRGMPSEDIEILEHWVQGGLRPDLTLLLDVPLEVSMARIGQTREKDRFEQEQADFFMRVRSVYLNRAAACPERYAVIDSNLGLDEVRNSIEKVLDRHFGC.

10-17 contributes to the ATP binding site; that stretch reads GIDGAGKS.

It belongs to the thymidylate kinase family.

The catalysed reaction is dTMP + ATP = dTDP + ADP. Functionally, phosphorylation of dTMP to form dTDP in both de novo and salvage pathways of dTTP synthesis. The sequence is that of Thymidylate kinase (tmk) from Neisseria meningitidis serogroup A / serotype 4A (strain DSM 15465 / Z2491).